A 50-amino-acid polypeptide reads, in one-letter code: Small ribosomal subunit protein uS14 (50 aa).

Residues Cys15, Cys18, Cys33, and Cys36 each coordinate Zn(2+).

The protein belongs to the universal ribosomal protein uS14 family. Zinc-binding uS14 subfamily. In terms of assembly, part of the 30S ribosomal subunit. Requires Zn(2+) as cofactor.

Binds 16S rRNA, required for the assembly of 30S particles. The protein is Small ribosomal subunit protein uS14 of Methanococcoides burtonii (strain DSM 6242 / NBRC 107633 / OCM 468 / ACE-M).